A 175-amino-acid chain; its full sequence is MMTYIVFILSVIFVVSFVGFSSKPSPIYGGLVLIVSGGVGCGIIMNFGGSFLGLMVFLIYLGGMLVVFGYTTAMATEQYPEVWVSNTTVMGVFLLGLLMEVMLVLYVLKSEEVGVVFKFSGVGAWAIYDTGDSGAFSEEIMGAAALYSYGAWVVIVTGWSLLVGVLVILEVTRGD.

5 helical membrane-spanning segments follow: residues 1-21 (MMTY…VGFS), 25-45 (SPIY…GIIM), 47-67 (FGGS…MLVV), 88-108 (TVMG…LYVL), and 149-169 (YGAW…LVIL).

Belongs to the complex I subunit 6 family. As to quaternary structure, core subunit of respiratory chain NADH dehydrogenase (Complex I) which is composed of 45 different subunits.

The protein localises to the mitochondrion inner membrane. The enzyme catalyses a ubiquinone + NADH + 5 H(+)(in) = a ubiquinol + NAD(+) + 4 H(+)(out). Core subunit of the mitochondrial membrane respiratory chain NADH dehydrogenase (Complex I) which catalyzes electron transfer from NADH through the respiratory chain, using ubiquinone as an electron acceptor. Essential for the catalytic activity and assembly of complex I. This chain is NADH-ubiquinone oxidoreductase chain 6 (MT-ND6), found in Equus caballus (Horse).